The chain runs to 540 residues: E3 ubiquitin-protein ligase rnf8-A (540 aa).

Residues 30-84 (VTLGRGLGVTYQLKPTLCPLMISRTHCLFKQNTGGEWTVTDNKSLNGVWRNKERL) form the FHA domain. Residues 128–205 (LIRPLPDKTK…SGTESRLNDS (78 aa)) are disordered. Polar residues-rich tracts occupy residues 152-162 (ASGNEGPSNFS) and 179-200 (SSHT…GTES). Residues 382 to 420 (CIICSEHFIEAVTLNCAHSFCSYCIKSWKKRKEECPICR) form an RING-type zinc finger. The tract at residues 517–540 (GTDELDSSDFESDDDEEEDSFLII) is disordered. Acidic residues predominate over residues 519-540 (DELDSSDFESDDDEEEDSFLII).

Belongs to the RNF8 family. As to quaternary structure, homodimer. Forms a E2-E3 ubiquitin ligase complex composed of the rnf8 homodimer and a E2 heterodimer of ube2n and ube2v2.

The protein resides in the nucleus. The catalysed reaction is S-ubiquitinyl-[E2 ubiquitin-conjugating enzyme]-L-cysteine + [acceptor protein]-L-lysine = [E2 ubiquitin-conjugating enzyme]-L-cysteine + N(6)-ubiquitinyl-[acceptor protein]-L-lysine.. It functions in the pathway protein modification; protein ubiquitination. Its function is as follows. E3 ubiquitin-protein ligase that plays a key role in DNA damage signaling via 2 distinct roles: by mediating the 'Lys-63'-linked ubiquitination of histones H2A and H2AX and promoting the recruitment of DNA repair proteins at double-strand breaks (DSBs) sites, and by catalyzing 'Lys-48'-linked ubiquitination to remove target proteins from DNA damage sites. Following DNA DSBs, it is recruited to the sites of damage by ATM-phosphorylated mdc1 and catalyzes the 'Lys-63'-linked ubiquitination of histones H2A and H2AX, thereby promoting the formation of tp53bp1 and brca1 ionizing radiation-induced foci (IRIF). H2A ubiquitination also mediates the ATM-dependent transcriptional silencing at regions flanking DSBs in cis, a mechanism to avoid collision between transcription and repair intermediates. Also catalyzes the formation of 'Lys-48'-linked polyubiquitin chains, leading to degradation of substrate proteins. In addition to its function in damage signaling, also plays a role in higher-order chromatin structure by mediating extensive chromatin decondensation. In Xenopus laevis (African clawed frog), this protein is E3 ubiquitin-protein ligase rnf8-A.